Here is a 134-residue protein sequence, read N- to C-terminus: Snaclec alboaggregin-A subunit alpha' (134 aa).

The 134-residue stretch at 1-134 folds into the C-type lectin domain; that stretch reads DFHCLPGWSA…NPFVCKFPPQ (134 aa). 3 disulfides stabilise this stretch: Cys4/Cys15, Cys32/Cys129, and Cys104/Cys121.

It belongs to the snaclec family. In terms of assembly, heterotetramer of the subunits alpha, alpha', beta and beta'; disulfide-linked. In terms of tissue distribution, expressed by the venom gland.

The protein resides in the secreted. In terms of biological role, potent platelet activator that aggregates platelets via both GPIbalpha (GP1BA) and GPVI (GP6). Induces a tyrosine phosphorylation profile in platelets that resembles this produced by collagen, involving the time dependent tyrosine phosphorylation of Fc receptor gamma chain (FCGR1A), phospholipase Cgamma2 (PLCG2), and LAT. This is Snaclec alboaggregin-A subunit alpha' from Trimeresurus albolabris (White-lipped pit viper).